We begin with the raw amino-acid sequence, 541 residues long: EH domain-containing protein 4 (541 aa).

Methionine 1 bears the N-acetylmethionine mark. The disordered stretch occupies residues 1 to 20 (MFSWMGRQAGGRERSGGMDA). The residue at position 15 (serine 15) is a Phosphoserine. The 232-residue stretch at 58–289 (FENKPMILLV…DLFRDIQSLP (232 aa)) folds into the Dynamin-type G domain. Residues 68–75 (GQYSTGKT) form a G1 motif region. 68–75 (GQYSTGKT) is a binding site for ATP. The interval 94–95 (EP) is G2 motif. Positions 156–159 (DSPG) are G3 motif. Residue serine 162 is modified to Phosphoserine. Positions 222–225 (NKAD) are G4 motif. Position 223 (lysine 223) interacts with ATP. Valine 246 is a region of interest (G5 motif). An ATP-binding site is contributed by tryptophan 261. The EH domain occupies 447 to 535 (DKPVYDELFY…PHLVPPSHRK (89 aa)). At tyrosine 451 the chain carries Phosphotyrosine. The residue at position 459 (serine 459) is a Phosphoserine. Residues 479–514 (LPNSVLGKIWKLADCDCDGMLDEEEFALAKHLIKIK) enclose the EF-hand domain. Residues aspartate 492, aspartate 494, aspartate 496, methionine 498, and glutamate 503 each coordinate Ca(2+).

It belongs to the TRAFAC class dynamin-like GTPase superfamily. Dynamin/Fzo/YdjA family. EHD subfamily. Homooligomer, and heterooligomer with EHD1, EHD2 and EHD3. Forms a complex with EHD4 and MICALL1; the complex controls CDH5 trafficking and coordinates angiogenesis.

Its subcellular location is the early endosome membrane. The protein localises to the recycling endosome membrane. The protein resides in the cell membrane. It is found in the cell junction. It localises to the adherens junction. Its function is as follows. ATP- and membrane-binding protein that probably controls membrane reorganization/tubulation upon ATP hydrolysis. Plays a role in early endosomal transport. During sprouting angiogenesis, in complex with PACSIN2 and MICALL1, forms recycling endosome-like tubular structure at asymmetric adherens junctions to control CDH5 trafficking. The sequence is that of EH domain-containing protein 4 from Mus musculus (Mouse).